The following is a 121-amino-acid chain: uncharacterized protein (121 aa).

The disordered stretch occupies residues 100 to 121 (KSFSNTKDGKKNDDDNNSSSKS).

This is an uncharacterized protein from Mycoplasma pneumoniae (strain ATCC 29342 / M129 / Subtype 1) (Mycoplasmoides pneumoniae).